The following is a 28-amino-acid chain: Peptide 2 (28 aa).

It belongs to the short scorpion toxin superfamily. Potassium channel inhibitor family. Alpha-KTx 09 subfamily. Expressed by the venom gland.

It is found in the secreted. Its function is as follows. Blocks potassium channels. This Hottentotta tamulus sindicus (Scorpion) protein is Peptide 2.